Consider the following 568-residue polypeptide: Urease subunit alpha (568 aa).

In terms of domain architecture, Urease spans 130 to 568; it reads GGIDTHIHFI…LPMAQRYFLF (439 aa). His135, His137, and Lys218 together coordinate Ni(2+). At Lys218 the chain carries N6-carboxylysine. Residue His220 coordinates substrate. Positions 247 and 273 each coordinate Ni(2+). Catalysis depends on His321, which acts as the Proton donor. Residue Asp361 coordinates Ni(2+).

The protein belongs to the metallo-dependent hydrolases superfamily. Urease alpha subunit family. In terms of assembly, heterotrimer of UreA (gamma), UreB (beta) and UreC (alpha) subunits. Three heterotrimers associate to form the active enzyme. Requires Ni cation as cofactor. Carboxylation allows a single lysine to coordinate two nickel ions.

The protein localises to the cytoplasm. It carries out the reaction urea + 2 H2O + H(+) = hydrogencarbonate + 2 NH4(+). The protein operates within nitrogen metabolism; urea degradation; CO(2) and NH(3) from urea (urease route): step 1/1. The polypeptide is Urease subunit alpha (Burkholderia multivorans (strain ATCC 17616 / 249)).